We begin with the raw amino-acid sequence, 276 residues long: Large ribosomal subunit protein uL2 (276 aa).

2 disordered regions span residues 37-59 (QIQK…GGHK) and 225-276 (VMNP…RHKR). Residues 39 to 49 (QKSGRNNNGHI) are compositionally biased toward polar residues. Basic residues predominate over residues 50-59 (TTRHKGGGHK).

The protein belongs to the universal ribosomal protein uL2 family. In terms of assembly, part of the 50S ribosomal subunit. Forms a bridge to the 30S subunit in the 70S ribosome.

One of the primary rRNA binding proteins. Required for association of the 30S and 50S subunits to form the 70S ribosome, for tRNA binding and peptide bond formation. It has been suggested to have peptidyltransferase activity; this is somewhat controversial. Makes several contacts with the 16S rRNA in the 70S ribosome. The sequence is that of Large ribosomal subunit protein uL2 from Ralstonia pickettii (strain 12J).